A 389-amino-acid polypeptide reads, in one-letter code: Lipid-A-disaccharide synthase (389 aa).

Belongs to the LpxB family.

The enzyme catalyses a lipid X + a UDP-2-N,3-O-bis[(3R)-3-hydroxyacyl]-alpha-D-glucosamine = a lipid A disaccharide + UDP + H(+). The protein operates within bacterial outer membrane biogenesis; LPS lipid A biosynthesis. Its function is as follows. Condensation of UDP-2,3-diacylglucosamine and 2,3-diacylglucosamine-1-phosphate to form lipid A disaccharide, a precursor of lipid A, a phosphorylated glycolipid that anchors the lipopolysaccharide to the outer membrane of the cell. The sequence is that of Lipid-A-disaccharide synthase from Burkholderia vietnamiensis (strain G4 / LMG 22486) (Burkholderia cepacia (strain R1808)).